A 39-amino-acid chain; its full sequence is Omega-actinopoditoxin-Mb1a (39 aa).

3 cysteine pairs are disulfide-bonded: Cys4/Cys19, Cys11/Cys30, and Cys18/Cys38.

Post-translationally, contains 3 disulfide bonds. In terms of tissue distribution, expressed by the venom gland.

The protein localises to the secreted. Functionally, potent inhibitor of insect, but not mammalian, voltage-gated calcium channels (Cav). This chain is Omega-actinopoditoxin-Mb1a, found in Missulena bradleyi (Eastern mouse spider).